The chain runs to 283 residues: NAD kinase (283 aa).

The active-site Proton acceptor is the D61. NAD(+) contacts are provided by residues 61-62 (DG), 134-135 (ND), R145, D164, 175-180 (TAYNLS), and Q234.

This sequence belongs to the NAD kinase family. It depends on a divalent metal cation as a cofactor.

Its subcellular location is the cytoplasm. The catalysed reaction is NAD(+) + ATP = ADP + NADP(+) + H(+). In terms of biological role, involved in the regulation of the intracellular balance of NAD and NADP, and is a key enzyme in the biosynthesis of NADP. Catalyzes specifically the phosphorylation on 2'-hydroxyl of the adenosine moiety of NAD to yield NADP. The chain is NAD kinase from Clostridium kluyveri (strain NBRC 12016).